The following is an 88-amino-acid chain: Phosphocarrier protein HPr (88 aa).

Positions 1–88 constitute an HPr domain; the sequence is MKTQQFTVID…TLLTEMGLAQ (88 aa). The active-site Pros-phosphohistidine intermediate is the His-15. Ser-46 is modified (phosphoserine; by HPrK/P).

It belongs to the HPr family.

It localises to the cytoplasm. Its activity is regulated as follows. Phosphorylation on Ser-46 inhibits the phosphoryl transfer from enzyme I to HPr. In terms of biological role, general (non sugar-specific) component of the phosphoenolpyruvate-dependent sugar phosphotransferase system (sugar PTS). This major carbohydrate active-transport system catalyzes the phosphorylation of incoming sugar substrates concomitantly with their translocation across the cell membrane. The phosphoryl group from phosphoenolpyruvate (PEP) is transferred to the phosphoryl carrier protein HPr by enzyme I. Phospho-HPr then transfers it to the PTS EIIA domain. Its function is as follows. P-Ser-HPr interacts with the catabolite control protein A (CcpA), forming a complex that binds to DNA at the catabolite response elements cre, operator sites preceding a large number of catabolite-regulated genes. Thus, P-Ser-HPr is a corepressor in carbon catabolite repression (CCR), a mechanism that allows bacteria to coordinate and optimize the utilization of available carbon sources. P-Ser-HPr also plays a role in inducer exclusion, in which it probably interacts with several non-PTS permeases and inhibits their transport activity. This chain is Phosphocarrier protein HPr (ptsH), found in Lysinibacillus sphaericus (Bacillus sphaericus).